The sequence spans 230 residues: RNA chaperone ProQ (230 aa).

Positions alanine 104–threonine 176 are disordered. Positions alanine 115 to lysine 132 are enriched in basic and acidic residues.

The protein belongs to the ProQ family.

Its subcellular location is the cytoplasm. Its function is as follows. RNA chaperone with significant RNA binding, RNA strand exchange and RNA duplexing activities. May regulate ProP activity through an RNA-based, post-transcriptional mechanism. The chain is RNA chaperone ProQ from Proteus mirabilis (strain HI4320).